We begin with the raw amino-acid sequence, 374 residues long: Peptide chain release factor 2 (374 aa).

Residue glutamine 249 is modified to N5-methylglutamine.

The protein belongs to the prokaryotic/mitochondrial release factor family. Methylated by PrmC. Methylation increases the termination efficiency of RF2.

Its subcellular location is the cytoplasm. Peptide chain release factor 2 directs the termination of translation in response to the peptide chain termination codons UGA and UAA. The sequence is that of Peptide chain release factor 2 from Ruegeria sp. (strain TM1040) (Silicibacter sp.).